A 394-amino-acid chain; its full sequence is MMHHCSITKPTFSISISTQKLHHHSSKFLNLGFRIRCESGDVSSPLRTKAVSLSSEMEDSSSLKKSLMELEGKKSEPYPGGMPKMGPFTGRDPNVKKPAWLRQKAPQGERFQEVKESLSRLNLNTVCEEAQCPNIGECWNGGGDGVATATIMVLGDTCTRGCRFCAVKTSRNPPPPDPMEPENTAKAIASWGVDYIVITSVDRDDIPDGGSGHFAQTVKAMKRHKPDIMIECLTSDFRGDLEAVDTLVHSGLDVFAHNVETVKRLQRLVRDPRAGYEQSMSVLKHAKISKPGMITKTSIMLGLGETDEELKEAMADLRAIDVDILTLGQYLQPTPLHLTVKEYVTPEKFDFWKTYGESIGFRYVASGPLVRSSYRAGELFVKTMVKESYSKSLS.

The N-terminal 36 residues, 1–36, are a transit peptide targeting the chloroplast; that stretch reads MMHHCSITKPTFSISISTQKLHHHSSKFLNLGFRIR. The [4Fe-4S] cluster site is built by Cys127, Cys132, Cys138, Cys158, Cys162, Cys165, and Ser373. The region spanning 141–362 is the Radical SAM core domain; it reads GGGDGVATAT…KTYGESIGFR (222 aa).

This sequence belongs to the radical SAM superfamily. Lipoyl synthase family. [4Fe-4S] cluster is required as a cofactor. Expressed in roots, leaves and flowers.

It is found in the plastid. The protein resides in the chloroplast. The catalysed reaction is [[Fe-S] cluster scaffold protein carrying a second [4Fe-4S](2+) cluster] + N(6)-octanoyl-L-lysyl-[protein] + 2 oxidized [2Fe-2S]-[ferredoxin] + 2 S-adenosyl-L-methionine + 4 H(+) = [[Fe-S] cluster scaffold protein] + N(6)-[(R)-dihydrolipoyl]-L-lysyl-[protein] + 4 Fe(3+) + 2 hydrogen sulfide + 2 5'-deoxyadenosine + 2 L-methionine + 2 reduced [2Fe-2S]-[ferredoxin]. It participates in protein modification; protein lipoylation via endogenous pathway; protein N(6)-(lipoyl)lysine from octanoyl-[acyl-carrier-protein]: step 2/2. In terms of biological role, catalyzes the radical-mediated insertion of two sulfur atoms into the C-6 and C-8 positions of the octanoyl moiety bound to the lipoyl domains of lipoate-dependent enzymes, thereby converting the octanoylated domains into lipoylated derivatives. Together with LIP2P and LIP2P2 is essential for de novo plastidial protein lipoylation during seed development. In Arabidopsis thaliana (Mouse-ear cress), this protein is Lipoyl synthase, chloroplastic.